The chain runs to 480 residues: Trigger factor (480 aa).

The 96-residue stretch at Gly169–Pro264 folds into the PPIase FKBP-type domain. The segment at Pro441–Gly480 is disordered. Over residues Glu449–Ala460 the composition is skewed to acidic residues. Over residues Val462–Gly480 the composition is skewed to polar residues.

Belongs to the FKBP-type PPIase family. Tig subfamily.

Its subcellular location is the cytoplasm. The catalysed reaction is [protein]-peptidylproline (omega=180) = [protein]-peptidylproline (omega=0). Functionally, involved in protein export. Acts as a chaperone by maintaining the newly synthesized protein in an open conformation. Functions as a peptidyl-prolyl cis-trans isomerase. This is Trigger factor from Nostoc punctiforme (strain ATCC 29133 / PCC 73102).